A 73-amino-acid chain; its full sequence is Mu-conotoxin SIIIA (73 aa).

A signal peptide spans 1–20; sequence MMSKLGVLLTVCPLLFPLTA. Positions 20–40 are disordered; the sequence is ALPPDGDQPADRPAERMQDDI. A propeptide spanning residues 21 to 49 is cleaved from the precursor; sequence LPPDGDQPADRPAERMQDDISSDEHPLFD. A compositionally biased stretch (basic and acidic residues) spans 28–40; sequence PADRPAERMQDDI. Q52 is subject to Pyrrolidone carboxylic acid. Intrachain disulfides connect C54/C64, C55/C70, and C59/C71. C71 bears the Cysteine amide mark.

The protein belongs to the conotoxin M superfamily. In terms of tissue distribution, expressed by the venom duct.

It localises to the secreted. Mu-conotoxins block voltage-gated sodium channels (Nav). This toxin moderately blocks rNav1.1/SCN1A, rNav1.2/SCN2A, rNav1.3/SCN3A, rNav1.4/SCN4A, and mNav1.6/SCN8A. The protein is Mu-conotoxin SIIIA of Conus striatus (Striated cone).